Here is a 303-residue protein sequence, read N- to C-terminus: Movement protein (303 aa).

It belongs to the tobamovirus movement protein family.

The protein resides in the host cytoplasm. Its subcellular location is the host cytoskeleton. It is found in the host cell junction. The protein localises to the host plasmodesma. Transports viral genome to neighboring plant cells directly through plasmosdesmata, without any budding. The movement protein allows efficient cell to cell propagation, by bypassing the host cell wall barrier. Forms a ribonucleoprotein complex with viral RNA. Binds microtubules and modulates microtubule stability. Can bind double-stranded DNA. The polypeptide is Movement protein (MP) (Odontoglossum ringspot virus (isolate Korean Cy) (ORSV-Cy)).